The following is a 212-amino-acid chain: Cytidylate kinase (212 aa).

11–19 (GPAASGKGT) is a binding site for ATP. The tract at residues 50 to 69 (GGDPADPAASEEQARSLSRL) is disordered.

The protein belongs to the cytidylate kinase family. Type 1 subfamily.

It localises to the cytoplasm. It carries out the reaction CMP + ATP = CDP + ADP. It catalyses the reaction dCMP + ATP = dCDP + ADP. This chain is Cytidylate kinase, found in Acidiphilium cryptum (strain JF-5).